The primary structure comprises 98 residues: Large ribosomal subunit protein uL23 (98 aa).

It belongs to the universal ribosomal protein uL23 family. Part of the 50S ribosomal subunit. Contacts protein L29, and trigger factor when it is bound to the ribosome.

One of the early assembly proteins it binds 23S rRNA. One of the proteins that surrounds the polypeptide exit tunnel on the outside of the ribosome. Forms the main docking site for trigger factor binding to the ribosome. This Frankia casuarinae (strain DSM 45818 / CECT 9043 / HFP020203 / CcI3) protein is Large ribosomal subunit protein uL23.